The sequence spans 84 residues: Exodeoxyribonuclease 7 small subunit (84 aa).

This sequence belongs to the XseB family. Heterooligomer composed of large and small subunits.

The protein localises to the cytoplasm. It carries out the reaction Exonucleolytic cleavage in either 5'- to 3'- or 3'- to 5'-direction to yield nucleoside 5'-phosphates.. Functionally, bidirectionally degrades single-stranded DNA into large acid-insoluble oligonucleotides, which are then degraded further into small acid-soluble oligonucleotides. The sequence is that of Exodeoxyribonuclease 7 small subunit from Herminiimonas arsenicoxydans.